Reading from the N-terminus, the 329-residue chain is D-alanine--D-alanine ligase (329 aa).

Residues 120–326 (KLWLSAIGIP…FAHYLEQILR (207 aa)) form the ATP-grasp domain. 150 to 205 (ALAKWGKVFIKAASQGSSVGCYSASNETDLLQGIKDAFGYSEQVLIEKAVKPRELE) lines the ATP pocket. Mg(2+)-binding residues include aspartate 280, glutamate 293, and asparagine 295.

The protein belongs to the D-alanine--D-alanine ligase family. It depends on Mg(2+) as a cofactor. Mn(2+) serves as cofactor.

It is found in the cytoplasm. It catalyses the reaction 2 D-alanine + ATP = D-alanyl-D-alanine + ADP + phosphate + H(+). It participates in cell wall biogenesis; peptidoglycan biosynthesis. Functionally, cell wall formation. The chain is D-alanine--D-alanine ligase from Aeromonas salmonicida (strain A449).